Here is a 483-residue protein sequence, read N- to C-terminus: UDP-N-acetylmuramoyl-L-alanyl-D-glutamate--2,6-diaminopimelate ligase (483 aa).

A UDP-N-acetyl-alpha-D-muramoyl-L-alanyl-D-glutamate-binding site is contributed by S30. Residue 109-115 (GTNGKTT) participates in ATP binding. UDP-N-acetyl-alpha-D-muramoyl-L-alanyl-D-glutamate is bound by residues 151–152 (TT), S178, and R186. K218 is subject to N6-carboxylysine. Residues R380, 403-406 (DNPR), G453, and E457 each bind meso-2,6-diaminopimelate. A Meso-diaminopimelate recognition motif motif is present at residues 403–406 (DNPR).

Belongs to the MurCDEF family. MurE subfamily. It depends on Mg(2+) as a cofactor. Post-translationally, carboxylation is probably crucial for Mg(2+) binding and, consequently, for the gamma-phosphate positioning of ATP.

It is found in the cytoplasm. The catalysed reaction is UDP-N-acetyl-alpha-D-muramoyl-L-alanyl-D-glutamate + meso-2,6-diaminopimelate + ATP = UDP-N-acetyl-alpha-D-muramoyl-L-alanyl-gamma-D-glutamyl-meso-2,6-diaminopimelate + ADP + phosphate + H(+). The protein operates within cell wall biogenesis; peptidoglycan biosynthesis. Catalyzes the addition of meso-diaminopimelic acid to the nucleotide precursor UDP-N-acetylmuramoyl-L-alanyl-D-glutamate (UMAG) in the biosynthesis of bacterial cell-wall peptidoglycan. The polypeptide is UDP-N-acetylmuramoyl-L-alanyl-D-glutamate--2,6-diaminopimelate ligase (Chlamydia pneumoniae (Chlamydophila pneumoniae)).